Reading from the N-terminus, the 263-residue chain is Phosphoribosylaminoimidazole-succinocarboxamide synthase (263 aa).

Residues 239–263 (MNENEPPKPAGPVLVSSKPDGETRH) are disordered.

Belongs to the SAICAR synthetase family.

The catalysed reaction is 5-amino-1-(5-phospho-D-ribosyl)imidazole-4-carboxylate + L-aspartate + ATP = (2S)-2-[5-amino-1-(5-phospho-beta-D-ribosyl)imidazole-4-carboxamido]succinate + ADP + phosphate + 2 H(+). The protein operates within purine metabolism; IMP biosynthesis via de novo pathway; 5-amino-1-(5-phospho-D-ribosyl)imidazole-4-carboxamide from 5-amino-1-(5-phospho-D-ribosyl)imidazole-4-carboxylate: step 1/2. The polypeptide is Phosphoribosylaminoimidazole-succinocarboxamide synthase (Chelativorans sp. (strain BNC1)).